The chain runs to 919 residues: Translocase of chloroplast 101, chloroplastic (919 aa).

Disordered regions lie at residues Ser20–Gly47 and Val64–Arg211. The span at Ser73 to Pro88 shows a compositional bias: basic and acidic residues. Residues Phe96–Lys128 are compositionally biased toward acidic residues. Residues Gln182–Gly207 show a composition bias toward polar residues. Residues Asp284 to Arg513 form the AIG1-type G domain. The tract at residues Gly293–Ser300 is G1. A GTP-binding site is contributed by Gly296–Ala301. Mg(2+) is bound at residue Ser300. The segment at Pro319–Lys323 is G2. Residues Asp340–Gly343 are G3. The interval Thr412–Ser415 is G4. Residues His413 and Glu461 to Asn462 each bind GTP. A G5 region spans residues Glu461–His463. 2 disordered regions span residues Leu540–Glu585 and Arg611–Asp650. Residues Glu543–Glu567 are compositionally biased toward acidic residues. Positions Leu574–Glu585 are enriched in basic and acidic residues. Over residues Ala629–Ala638 the composition is skewed to acidic residues. The segment covering Pro641 to Asp650 has biased composition (low complexity). Residues Met893–Gly914 traverse the membrane as a helical segment.

Belongs to the TRAFAC class TrmE-Era-EngA-EngB-Septin-like GTPase superfamily. AIG1/Toc34/Toc159-like paraseptin GTPase family. TOC159 subfamily. In terms of assembly, part of the TOC core complex. Requires Mg(2+) as cofactor.

It is found in the plastid. The protein resides in the chloroplast outer membrane. GTPase involved in protein precursor import into chloroplasts. Seems to recognize chloroplast-destined precursor proteins and regulate their presentation to the translocation channel through GTP hydrolysis. Probably specialized in the import of nuclear encoded non-photosynthetic preproteins from the cytoplasm to the chloroplast. This Physcomitrium patens (Spreading-leaved earth moss) protein is Translocase of chloroplast 101, chloroplastic.